We begin with the raw amino-acid sequence, 340 residues long: Conidiation-specific protein 13 (340 aa).

Residues 313 to 340 (AEAAAGISSGKPAADRKTKGKKGTKFRV) form a disordered region. The span at 330 to 340 (TKGKKGTKFRV) shows a compositional bias: basic residues.

In Neurospora crassa (strain ATCC 24698 / 74-OR23-1A / CBS 708.71 / DSM 1257 / FGSC 987), this protein is Conidiation-specific protein 13 (con-13).